The sequence spans 271 residues: Peroxisomal biogenesis factor 2 (271 aa).

The Peroxisomal matrix segment spans residues 1–2; it reads MS. Residues 3-29 traverse the membrane as a helical segment; the sequence is RVAQLDSIALDKELYGQFWSEFNAAFN. The Cytoplasmic segment spans residues 30-33; sequence TSEH. The chain crosses the membrane as a helical span at residues 34–60; sequence KEEWELALNTVVFMCATRFLPHYGSSC. Over 61-77 the chain is Peroxisomal matrix; the sequence is TYGSALSGVVFQCRKRT. The helical transmembrane segment at 78-97 threads the bilayer; that stretch reads LYVVTVLAGYVWKKITHIIF. At 98-101 the chain is on the cytoplasmic side; the sequence is NGPH. A helical transmembrane segment spans residues 102-133; that stretch reads CGNQMMWLKLYKWVNLLYHGCDVTNFLRFLAA. At 134–175 the chain is on the peroxisomal matrix side; that stretch reads EGPNARAFLSPLYRAFNVHSTRLIRDGSAIASEFYSNSVFAG. A helical membrane pass occupies residues 176–197; the sequence is LEYQNRQLLWNALLELFSNTLL. The Cytoplasmic portion of the chain corresponds to 198–271; the sequence is TKRGLLTFVK…SGRLTASPVY (74 aa). Cysteine 222, cysteine 225, cysteine 237, cysteine 238, cysteine 243, cysteine 246, cysteine 256, and cysteine 259 together coordinate Zn(2+). An RING-type zinc finger spans residues 222 to 259; that stretch reads CPRCGGFPTNPYQIACCRANYCYVCVVKALEWSMCDAC.

The protein belongs to the pex2/pex10/pex12 family. In terms of assembly, component of the PEX2-PEX10-PEX12 retrotranslocation channel, composed of PEX2, PEX10 and PEX12.

The protein resides in the peroxisome membrane. It catalyses the reaction [E2 ubiquitin-conjugating enzyme]-S-ubiquitinyl-L-cysteine + [acceptor protein]-L-cysteine = [E2 ubiquitin-conjugating enzyme]-L-cysteine + [acceptor protein]-S-ubiquitinyl-L-cysteine.. Its pathway is protein modification; protein ubiquitination. Its function is as follows. E3 ubiquitin-protein ligase component of a retrotranslocation channel required for peroxisome organization by mediating export of the PEX5 receptor from peroxisomes to the cytosol, thereby promoting PEX5 recycling. The retrotranslocation channel is composed of PEX2, PEX10 and PEX12; each subunit contributing transmembrane segments that coassemble into an open channel that specifically allows the passage of PEX5 through the peroxisomal membrane. PEX2 also regulates peroxisome organization by acting as a E3 ubiquitin-protein ligase. PEX2 ubiquitinates PEX5 during its passage through the retrotranslocation channel: catalyzes monoubiquitination of PEX5 at 'Cys-6', a modification that acts as a signal for PEX5 extraction into the cytosol. This is Peroxisomal biogenesis factor 2 from Saccharomyces cerevisiae (strain ATCC 204508 / S288c) (Baker's yeast).